Here is a 262-residue protein sequence, read N- to C-terminus: MAAAVAGILRGGLPPRAAWLPTLQTVRHGSKAVTRHWRVMHFQRQKLMAITEYIPPKPAINPRCLPPPPKPPKEESGLVRLLRQDIVAVFRDNRMIAVCQNVALSAEDKLLLRHQLRKHKIFIKVFPSQVLKPFLENSKYRNLLPLFVGHNLLLVSEEPKVKEMVRVLKSVPFLPLLGGCVDDTILSRQGLVDYAKLPSLDQLQGQLVGGLTHLMAQTRYLLQHQPVQLTSLLDQYVKEQNEGDCATSANEKLHPPDPAPDA.

The transit peptide at 1–28 (MAAAVAGILRGGLPPRAAWLPTLQTVRH) directs the protein to the mitochondrion. The interval 243–262 (GDCATSANEKLHPPDPAPDA) is disordered.

Belongs to the universal ribosomal protein uL10 family. Component of the mitochondrial ribosome large subunit (39S) which comprises a 16S rRNA and about 50 distinct proteins.

It localises to the mitochondrion. The chain is Large ribosomal subunit protein uL10m (Mrpl10) from Mus musculus (Mouse).